The following is a 217-amino-acid chain: NADPH-dependent 3-demethoxyubiquinone 3-hydroxylase, mitochondrial (217 aa).

A run of 2 repeats spans residues 48–129 (AVDQ…TALL) and 130–217 (GKEG…SERF). The segment at 48 to 217 (AVDQIIRVDH…SAAIYLSERF (170 aa)) is 2 X approximate tandem repeats. Residues E60, E90, H93, E142, E178, and H181 each coordinate Fe cation. Y212 and R216 together coordinate NADH.

The protein belongs to the COQ7 family. Component of a multi-subunit COQ enzyme complex. Interacts with COQ8B and COQ6. Interacts with COQ9. Requires Fe cation as cofactor.

It localises to the mitochondrion inner membrane. It carries out the reaction a 5-methoxy-2-methyl-3-(all-trans-polyprenyl)benzoquinone + NADH + O2 = a 3-demethylubiquinone + NAD(+) + H2O. Its pathway is cofactor biosynthesis; ubiquinone biosynthesis. In terms of biological role, catalyzes the hydroxylation of the 5-methoxy-2-methyl-3-(all-trans-polyprenyl)benzoquinone at the C6 position and participates in the biosynthesis of ubiquinone. Catalyzes the reaction through a substrate-mediated reduction pathway, whereby NADH shuttles electrons to 5-methoxy-2-methyl-3-(all-trans-decaprenyl)benzoquinone, which then transfers the electrons to the two Fe(3+) centers. The binding of 5-methoxy-2-methyl-3-(all-trans-polyprenyl)benzoquinone (DMQn) mediates reduction of the diiron center by nicotinamide adenine dinucleotide (NADH) and initiates oxygen activation for subsequent DMQ hydroxylation. The physiological substrates are 5-methoxy-2-methyl-3-(all-trans-nonaprenyl)benzoquinone (DMQ(9)) and 5-methoxy-2-methyl-3-(all-trans-decaprenyl)benzoquinone (DMQ(10)), however in vitro the enzyme does not have any specificity concerning the length of the polyprenyl tail, and accepts tails of various lengths with similar efficiency. Also has a structural role in the COQ enzyme complex, stabilizing other COQ polypeptides. Involved in lifespan determination in a ubiquinone-independent manner. Plays a role in modulating mitochondrial stress responses, acting in the nucleus, perhaps via regulating gene expression, independent of its characterized mitochondrial function in ubiquinone biosynthesis. This chain is NADPH-dependent 3-demethoxyubiquinone 3-hydroxylase, mitochondrial, found in Rattus norvegicus (Rat).